The chain runs to 398 residues: Metalloprotease MmpA (398 aa).

Residue histidine 22 participates in Zn(2+) binding. Glutamate 23 is a catalytic residue. Histidine 26 contributes to the Zn(2+) binding site. 3 helical membrane-spanning segments follow: residues 117–139, 316–338, and 362–381; these read FIAV…VILV, QFWL…IPVL, and AAGF…FAAW. Residues 130-203 enclose the PDZ domain; sequence AILVFAVILV…MPIDFAVERD (74 aa).

The protein belongs to the peptidase M50B family. Zn(2+) serves as cofactor.

It is found in the cell inner membrane. In terms of biological role, involved in the regulated intramembrane proteolysis (RIP) of the short isoform of PodJ protein (PodJS), during the swarmer-to-stalked transition. The cleavage occurs near or within the single transmembrane of PodJS thereby releasing the N-terminal segment into the cytoplasm for subsequent degradation. It contributes to preserve asymmetry in the next cell cycle through sequential degradation. In Caulobacter vibrioides (strain ATCC 19089 / CIP 103742 / CB 15) (Caulobacter crescentus), this protein is Metalloprotease MmpA (mmpA).